The sequence spans 157 residues: Monooxygenase CPUR_05417 (157 aa).

This sequence belongs to the avfA family.

It functions in the pathway secondary metabolite biosynthesis. In terms of biological role, monooxygenase; part of the ergochrome gene cluster responsible for the typical purple-black color of the ergot sclerotia. The ergochrome gene cluster produces several ergot pigments including the yellow ergochrome secalonic acid and its derivatives, as well as the red anthraquinones endocrocin and clavorubin. The pathway begins with the synthesis of atrochrysone thioester by the polyketide synthase (PKS) CPUR_05437. The atrochrysone carboxyl ACP thioesterase CPUR_05436 then breaks the thioester bond and releases the atrochrysone carboxylic acid from CPUR_05437. The atrochrysone carboxylic acid is then converted to atrochrysone which is further transformed into emodin anthrone. The next step is performed by the anthrone oxygenase CPUR_05434 that catalyzes the oxidation of emodinanthrone to emodin. Emodin is further modified to yield monodictyphenone via several steps involving CPUR_05427, CPUR_05428, CPUR_05429 and CPUR_05430. The short chain dehydrogenase/reductase CPUR_05418 then catalyzes the C-5 ketoreduction to give the xanthone skeleton of the monomeric units. Ergochromes formation requires further dimerization steps of different xanthone units, probably catalyzed by the cytochrome P450 monooxygenase CPUR_05419. CPUR_05425, CPUR_05426 and CPUR_05431 are unique to Claviceps, thus it is likely that they are involved in further modification of xanthone units or in their dimerization. The yellow ergochromes and the red anthraquinone pigments endocrocin and clavorubin are products from the same PKS derived precursors and the latter are likely shunt products in the pathway of xanthone biosynthesis. It is proposed that atrochrysone carboxylic acid released from the PKS CPUR_05437 can also be converted to endocrocin anthrone which is further oxidized into endocrocin by CPUR_05435. Endocrocin could be then modified to clavorubin, possibly by CPUR_05423 and CPUR_05431. Clavorubin is the principal anthraquinone metabolite produced by the cluster with a much higher yield compared to endocrocin. The polypeptide is Monooxygenase CPUR_05417 (Claviceps purpurea (strain 20.1) (Ergot fungus)).